We begin with the raw amino-acid sequence, 382 residues long: ATP phosphoribosyltransferase regulatory subunit (382 aa).

This sequence belongs to the class-II aminoacyl-tRNA synthetase family. HisZ subfamily. As to quaternary structure, heteromultimer composed of HisG and HisZ subunits.

The protein resides in the cytoplasm. The protein operates within amino-acid biosynthesis; L-histidine biosynthesis; L-histidine from 5-phospho-alpha-D-ribose 1-diphosphate: step 1/9. Required for the first step of histidine biosynthesis. May allow the feedback regulation of ATP phosphoribosyltransferase activity by histidine. This Burkholderia ambifaria (strain MC40-6) protein is ATP phosphoribosyltransferase regulatory subunit.